Reading from the N-terminus, the 239-residue chain is Uridylate kinase (239 aa).

10–13 is an ATP binding site; that stretch reads KISG. The tract at residues 18 to 23 is involved in allosteric activation by GTP; sequence GEAGFG. Position 52 (Gly52) interacts with UMP. Residues Gly53 and Arg57 each coordinate ATP. UMP contacts are provided by residues Asp72 and 133-140; that span reads TGNPYFST. Positions 161, 167, and 170 each coordinate ATP.

This sequence belongs to the UMP kinase family. As to quaternary structure, homohexamer.

It localises to the cytoplasm. It carries out the reaction UMP + ATP = UDP + ADP. It functions in the pathway pyrimidine metabolism; CTP biosynthesis via de novo pathway; UDP from UMP (UMPK route): step 1/1. With respect to regulation, allosterically activated by GTP. Inhibited by UTP. Catalyzes the reversible phosphorylation of UMP to UDP. The chain is Uridylate kinase from Lacticaseibacillus paracasei (strain ATCC 334 / BCRC 17002 / CCUG 31169 / CIP 107868 / KCTC 3260 / NRRL B-441) (Lactobacillus paracasei).